A 100-amino-acid polypeptide reads, in one-letter code: Urease subunit gamma (100 aa).

The protein belongs to the urease gamma subunit family. As to quaternary structure, heterotrimer of UreA (gamma), UreB (beta) and UreC (alpha) subunits. Three heterotrimers associate to form the active enzyme.

The protein localises to the cytoplasm. It catalyses the reaction urea + 2 H2O + H(+) = hydrogencarbonate + 2 NH4(+). It participates in nitrogen metabolism; urea degradation; CO(2) and NH(3) from urea (urease route): step 1/1. In Agrobacterium fabrum (strain C58 / ATCC 33970) (Agrobacterium tumefaciens (strain C58)), this protein is Urease subunit gamma.